We begin with the raw amino-acid sequence, 78 residues long: Acyl carrier protein (78 aa).

The Carrier domain occupies 2–77; sequence SSIEERVKKI…LAINYINENL (76 aa). Serine 37 is subject to O-(pantetheine 4'-phosphoryl)serine.

The protein belongs to the acyl carrier protein (ACP) family. 4'-phosphopantetheine is transferred from CoA to a specific serine of apo-ACP by AcpS. This modification is essential for activity because fatty acids are bound in thioester linkage to the sulfhydryl of the prosthetic group.

The protein localises to the cytoplasm. Its pathway is lipid metabolism; fatty acid biosynthesis. Its function is as follows. Carrier of the growing fatty acid chain in fatty acid biosynthesis. The sequence is that of Acyl carrier protein from Saccharophagus degradans (strain 2-40 / ATCC 43961 / DSM 17024).